A 398-amino-acid polypeptide reads, in one-letter code: Ureide permease 2 (398 aa).

Residues 1–10 (MYLVESKGGA) lie on the Extracellular side of the membrane. A helical membrane pass occupies residues 11–31 (IACMLLALLSLGTWPAVLTLL). Residues 32–44 (ERRGRLPQHTYLD) lie on the Cytoplasmic side of the membrane. The helical transmembrane segment at 45-65 (YSITNLLAAIIIAFTFGQIGS) threads the bilayer. Residues 66–81 (TKPDSPNFITQLAQDN) are Extracellular-facing. Residues 82-102 (WPSVMFAMAGGIVLSLGNLST) traverse the membrane as a helical segment. At 103–104 (QY) the chain is on the cytoplasmic side. Residues 105 to 125 (AWALVGLSVTEVITSSITVVI) traverse the membrane as a helical segment. Over 126-139 (GSTLNYFLDDKINK) the chain is Extracellular. A helical transmembrane segment spans residues 140–160 (AEILFPGVACFLIAVCLGSAV). The Cytoplasmic portion of the chain corresponds to 161–229 (HRSNADDNKA…RAIKVFGKRK (69 aa)). Residues 176–200 (ETAKQEASGPSTEIGTNSSKDLETN) form a disordered region. Residues 183–200 (SGPSTEIGTNSSKDLETN) show a composition bias toward polar residues. ATP is bound at residue 221–228 (AIKVFGKR). The helical transmembrane segment at 230–250 (IIGLAITFFAGLCFSLFSPAF) threads the bilayer. Residues 251–272 (NLATNDQWNRLKQGVPKLVVYT) lie on the Extracellular side of the membrane. The chain crosses the membrane as a helical span at residues 273–293 (AFFYFSVSCFIIALILNVVFL). Topologically, residues 294-315 (YYPVLGLPKSSFKAYLNDWNGR) are cytoplasmic. The chain crosses the membrane as a helical span at residues 316–336 (YWAFLAGFLCGFGNGLQFMGG). At 337–341 (QAAGY) the chain is on the extracellular side. The helical transmembrane segment at 342 to 362 (AAADSVQALPLVSTFWGVVLF) threads the bilayer. Topologically, residues 363–371 (GEYRRSSRK) are cytoplasmic. The helical transmembrane segment at 372 to 392 (TYLLLFCMLFMFISAVAVLMA) threads the bilayer. Residues 393-398 (SSGHRK) lie on the Extracellular side of the membrane.

It belongs to the plant ureide permease (TC 2.A.7.19) family. As to expression, expressed in root xylem, cotyledons and leaves. Expressed in leaf blades, petioles, trichomes, stems, flower stigma, the upper part of pedicels, sepals, and the top and bottom parts of carpels in siliques.

It localises to the membrane. Functionally, proton-coupled transporter that transports a wide spectrum of oxo derivatives of heterocyclic nitrogen compounds, including allantoin, uric acid and xanthine, but not adenine. Mediates high affinity transport of uracil and 5-fluorouracil (a toxic uracil analog). Mediates transport of free pyrimidines and may function during early seedling development in salvage pathways, by the utilization of pyrimidines from seed storage tissue. In Arabidopsis thaliana (Mouse-ear cress), this protein is Ureide permease 2.